The sequence spans 118 residues: Large ribosomal subunit protein bL20 (118 aa).

Belongs to the bacterial ribosomal protein bL20 family.

Functionally, binds directly to 23S ribosomal RNA and is necessary for the in vitro assembly process of the 50S ribosomal subunit. It is not involved in the protein synthesizing functions of that subunit. This chain is Large ribosomal subunit protein bL20, found in Acidiphilium cryptum (strain JF-5).